A 469-amino-acid polypeptide reads, in one-letter code: 3-isopropylmalate dehydratase large subunit (469 aa).

Positions 349, 410, and 413 each coordinate [4Fe-4S] cluster.

Belongs to the aconitase/IPM isomerase family. LeuC type 1 subfamily. As to quaternary structure, heterodimer of LeuC and LeuD. It depends on [4Fe-4S] cluster as a cofactor.

The enzyme catalyses (2R,3S)-3-isopropylmalate = (2S)-2-isopropylmalate. It functions in the pathway amino-acid biosynthesis; L-leucine biosynthesis; L-leucine from 3-methyl-2-oxobutanoate: step 2/4. Functionally, catalyzes the isomerization between 2-isopropylmalate and 3-isopropylmalate, via the formation of 2-isopropylmaleate. This is 3-isopropylmalate dehydratase large subunit from Aromatoleum aromaticum (strain DSM 19018 / LMG 30748 / EbN1) (Azoarcus sp. (strain EbN1)).